Consider the following 236-residue polypeptide: Three prime repair exonuclease 2 (236 aa).

Residues Asp14 and Glu16 each coordinate Mg(2+). Substrate-binding positions include 16–17 (EA) and Tyr122. The Proton donor/acceptor role is filled by His188. Position 193 (Asp193) interacts with Mg(2+). Residue Asp193 participates in substrate binding.

This sequence belongs to the exonuclease superfamily. TREX family. As to quaternary structure, homodimer. Mg(2+) serves as cofactor.

It is found in the nucleus. The enzyme catalyses Exonucleolytic cleavage in the 3'- to 5'-direction to yield nucleoside 5'-phosphates.. In terms of biological role, exonuclease with a preference for double-stranded DNA with mismatched 3' termini. May play a role in DNA repair. This chain is Three prime repair exonuclease 2 (Trex2), found in Mus musculus (Mouse).